The following is an 88-amino-acid chain: Small ribosomal subunit protein uS17 (88 aa).

The protein belongs to the universal ribosomal protein uS17 family. In terms of assembly, part of the 30S ribosomal subunit.

Its function is as follows. One of the primary rRNA binding proteins, it binds specifically to the 5'-end of 16S ribosomal RNA. The polypeptide is Small ribosomal subunit protein uS17 (Pseudomonas savastanoi pv. phaseolicola (strain 1448A / Race 6) (Pseudomonas syringae pv. phaseolicola (strain 1448A / Race 6))).